A 540-amino-acid polypeptide reads, in one-letter code: Chaperonin GroEL 1 (540 aa).

Residues 29-32 (TLGP), 86-90 (DGTTT), Gly-413, 478-480 (NAA), and Asp-494 each bind ATP.

This sequence belongs to the chaperonin (HSP60) family. Forms a cylinder of 14 subunits composed of two heptameric rings stacked back-to-back. Interacts with the co-chaperonin GroES.

The protein resides in the cytoplasm. The enzyme catalyses ATP + H2O + a folded polypeptide = ADP + phosphate + an unfolded polypeptide.. Functionally, together with its co-chaperonin GroES, plays an essential role in assisting protein folding. The GroEL-GroES system forms a nano-cage that allows encapsulation of the non-native substrate proteins and provides a physical environment optimized to promote and accelerate protein folding. The chain is Chaperonin GroEL 1 from Mycobacterium sp. (strain JLS).